The sequence spans 243 residues: Small ribosomal subunit protein uS3 (243 aa).

The 72-residue stretch at 39–110 folds into the KH type-2 domain; it reads IRTFIQKKYG…QVRINVVEVE (72 aa). Residues 216 to 243 form a disordered region; that stretch reads QTIPVGASPKRKASRRPQQFEDRSNENS. The span at 233–243 shows a compositional bias: basic and acidic residues; sequence QQFEDRSNENS.

It belongs to the universal ribosomal protein uS3 family. In terms of assembly, part of the 30S ribosomal subunit. Forms a tight complex with proteins S10 and S14.

Its function is as follows. Binds the lower part of the 30S subunit head. Binds mRNA in the 70S ribosome, positioning it for translation. The polypeptide is Small ribosomal subunit protein uS3 (Prochlorococcus marinus (strain AS9601)).